Here is a 237-residue protein sequence, read N- to C-terminus: MTVTNDPVVLMKQEVGKAAAQRVHSDTIIGLGTGSTTAYAIQYIGERIQTGELKNVVGVPTSFGAEVLARKYGVPLTTLDVIDKMDLAIDGADEVDPQKNLIKGGGAAHTREKIVDSLADVFIVVVDSGKLVDKLGSTFLLPVEVIPMAVTPVIKALEKLGGKTDLRMGVKKAGPVVTDQGNLVIDVKFDNIEDPANLEKTINNIPGVLENGLFVGVADLILVGEIIDGKPRVREIS.

Residues 33–36, 90–93, and 103–106 each bind substrate; these read TGST, DGAD, and KGGG. Residue E112 is the Proton acceptor of the active site. Position 130 (K130) interacts with substrate.

The protein belongs to the ribose 5-phosphate isomerase family. In terms of assembly, homodimer.

The catalysed reaction is aldehydo-D-ribose 5-phosphate = D-ribulose 5-phosphate. It participates in carbohydrate degradation; pentose phosphate pathway; D-ribose 5-phosphate from D-ribulose 5-phosphate (non-oxidative stage): step 1/1. Catalyzes the reversible conversion of ribose-5-phosphate to ribulose 5-phosphate. This chain is Ribose-5-phosphate isomerase A, found in Gloeothece citriformis (strain PCC 7424) (Cyanothece sp. (strain PCC 7424)).